The sequence spans 467 residues: Asparagine--tRNA ligase (467 aa).

It belongs to the class-II aminoacyl-tRNA synthetase family. Homodimer.

It localises to the cytoplasm. The catalysed reaction is tRNA(Asn) + L-asparagine + ATP = L-asparaginyl-tRNA(Asn) + AMP + diphosphate + H(+). The polypeptide is Asparagine--tRNA ligase (Legionella pneumophila (strain Lens)).